The sequence spans 186 residues: Intraflagellar transport protein 27 homolog (186 aa).

GTP-binding positions include 12 to 19 (GDPAVGKT), 64 to 68 (DSAGK), and 123 to 126 (TKTD).

The protein belongs to the small GTPase superfamily. Rab family. Component of the IFT complex B, at least composed of IFT20, IFT22, IFT25, IFT27, IFT46, IFT52, TRAF3IP1/IFT54, IFT57, IFT74, IFT80, IFT81, and IFT88. Interacts with IFT25. Interacts with IFT70B. Interacts with RABL2/RABL2A; binding is equal in the presence of GTP or GDP. Interacts with IFT88. Interacts with ARL6; recognizes and binds with the GTP-free form of ARL6. Expressed predominantly in the testis (at protein level). Co-localizes with RABL2/RABL2A in the midpiece of elongated spermatids within the testis (at protein level).

It is found in the cell projection. The protein resides in the cilium. Its subcellular location is the cytoplasm. It localises to the flagellum. Functionally, small GTPase-like component of the intraflagellar transport (IFT) complex B that promotes the exit of the BBSome complex from cilia via its interaction with ARL6. Not involved in entry of the BBSome complex into cilium. Prevents aggregation of GTP-free ARL6. Required for hedgehog signaling. Forms a subcomplex within the IFT complex B with IFT25. Its role in intraflagellar transport is mainly seen in tissues rich in ciliated cells such as kidney and testis. Essential for male fertility, spermiogenesis and sperm flagella formation. Plays a role in the early development of the kidney. May be involved in the regulation of ureteric bud initiation. The protein is Intraflagellar transport protein 27 homolog (Ift27) of Mus musculus (Mouse).